Consider the following 160-residue polypeptide: Probable prefoldin subunit 5 (160 aa).

This sequence belongs to the prefoldin subunit alpha family. As to quaternary structure, heterohexamer of two PFD-alpha type and four PFD-beta type subunits.

Its function is as follows. Binds specifically to cytosolic chaperonin (c-CPN) and transfers target proteins to it. Binds to nascent polypeptide chain and promotes folding in an environment in which there are many competing pathways for nonnative proteins. In Dictyostelium discoideum (Social amoeba), this protein is Probable prefoldin subunit 5 (pfdn5).